We begin with the raw amino-acid sequence, 496 residues long: 2-methylcitrate dehydratase-like protein oryR (496 aa).

Belongs to the PrpD family.

It participates in secondary metabolite biosynthesis. Functionally, 2-methylcitrate dehydratase-like protein; part of the gene cluster that mediates the biosynthesis of oryzines, natural products with an unusual maleidride backbone. The two subunits of the fungal fatty acid synthase oryfasA and oryfasB probably form octenoic acid. This fatty acid is most likely activated by the acyl-CoA ligase oryP to give octenyl-CoA before the citrate synthase-like protein oryE catalyzes condensation with oxaloacetate to form tricarboxylic acid. The next steps of the pathways are conjectural, but a favorite possible route has been proposed, beginning with decarboxylation and concomitant dehydration by the decarboxylase oryM, followed by tautomerization, which may lead to the production of a diene intermediate. Reduction of this diene intermediate could give the known metabolite piliformic acid. On the pathway to oryzine B and oryzine A, however, hydroxylation of the diene by the alpha-ketoglutarate-dependent dioxygenase oryG and lactonisation by the lactonohydrolases oryH or oryL could give oryzine B directly. Finally, enoyl reduction by the dehydrogenase oryD would then convert oryzine B into oryzine A. This Aspergillus oryzae (strain ATCC 42149 / RIB 40) (Yellow koji mold) protein is 2-methylcitrate dehydratase-like protein oryR.